Consider the following 262-residue polypeptide: Phosphoribosylformylglycinamidine synthase subunit PurQ (262 aa).

Positions Arg-2–Pro-238 constitute a Glutamine amidotransferase type-1 domain. Cys-87 acts as the Nucleophile in catalysis. Catalysis depends on residues His-223 and Glu-225.

In terms of assembly, part of the FGAM synthase complex composed of 1 PurL, 1 PurQ and 2 PurS subunits.

It localises to the cytoplasm. It catalyses the reaction N(2)-formyl-N(1)-(5-phospho-beta-D-ribosyl)glycinamide + L-glutamine + ATP + H2O = 2-formamido-N(1)-(5-O-phospho-beta-D-ribosyl)acetamidine + L-glutamate + ADP + phosphate + H(+). The enzyme catalyses L-glutamine + H2O = L-glutamate + NH4(+). The protein operates within purine metabolism; IMP biosynthesis via de novo pathway; 5-amino-1-(5-phospho-D-ribosyl)imidazole from N(2)-formyl-N(1)-(5-phospho-D-ribosyl)glycinamide: step 1/2. Part of the phosphoribosylformylglycinamidine synthase complex involved in the purines biosynthetic pathway. Catalyzes the ATP-dependent conversion of formylglycinamide ribonucleotide (FGAR) and glutamine to yield formylglycinamidine ribonucleotide (FGAM) and glutamate. The FGAM synthase complex is composed of three subunits. PurQ produces an ammonia molecule by converting glutamine to glutamate. PurL transfers the ammonia molecule to FGAR to form FGAM in an ATP-dependent manner. PurS interacts with PurQ and PurL and is thought to assist in the transfer of the ammonia molecule from PurQ to PurL. The protein is Phosphoribosylformylglycinamidine synthase subunit PurQ of Methanothrix thermoacetophila (strain DSM 6194 / JCM 14653 / NBRC 101360 / PT) (Methanosaeta thermophila).